The primary structure comprises 256 residues: Deoxyribose-phosphate aldolase (256 aa).

The active-site Proton donor/acceptor is the Asp102. The active-site Schiff-base intermediate with acetaldehyde is Lys165. Lys197 (proton donor/acceptor) is an active-site residue.

It belongs to the DeoC/FbaB aldolase family. DeoC type 2 subfamily.

The protein localises to the cytoplasm. The enzyme catalyses 2-deoxy-D-ribose 5-phosphate = D-glyceraldehyde 3-phosphate + acetaldehyde. The protein operates within carbohydrate degradation; 2-deoxy-D-ribose 1-phosphate degradation; D-glyceraldehyde 3-phosphate and acetaldehyde from 2-deoxy-alpha-D-ribose 1-phosphate: step 2/2. In terms of biological role, catalyzes a reversible aldol reaction between acetaldehyde and D-glyceraldehyde 3-phosphate to generate 2-deoxy-D-ribose 5-phosphate. The polypeptide is Deoxyribose-phosphate aldolase (Shewanella baltica (strain OS155 / ATCC BAA-1091)).